Consider the following 59-residue polypeptide: Large ribosomal subunit protein uL30 (59 aa).

Belongs to the universal ribosomal protein uL30 family. Part of the 50S ribosomal subunit.

The chain is Large ribosomal subunit protein uL30 from Buchnera aphidicola subsp. Acyrthosiphon pisum (strain 5A).